Here is a 488-residue protein sequence, read N- to C-terminus: GTPase Der (488 aa).

EngA-type G domains are found at residues P3 to M166 and I199 to T372. GTP contacts are provided by residues G9–S16, D56–I60, N118–D121, G205–S212, D252–V256, and N317–D320. Residues R373–D457 form the KH-like domain. Residues F460–K488 are disordered. Over residues R473–K488 the composition is skewed to basic residues.

It belongs to the TRAFAC class TrmE-Era-EngA-EngB-Septin-like GTPase superfamily. EngA (Der) GTPase family. In terms of assembly, associates with the 50S ribosomal subunit.

In terms of biological role, GTPase that plays an essential role in the late steps of ribosome biogenesis. The protein is GTPase Der of Shewanella baltica (strain OS155 / ATCC BAA-1091).